Reading from the N-terminus, the 273-residue chain is Dermonecrotic toxin LspiSicTox-betaIE1ii (273 aa).

The active site involves H5. Residues E25 and D27 each coordinate Mg(2+). The active-site Nucleophile is the H41. 2 disulfides stabilise this stretch: C45–C51 and C47–C189. Residue D85 coordinates Mg(2+).

This sequence belongs to the arthropod phospholipase D family. Class II subfamily. Mg(2+) is required as a cofactor. In terms of tissue distribution, expressed by the venom gland.

Its subcellular location is the secreted. It carries out the reaction an N-(acyl)-sphingosylphosphocholine = an N-(acyl)-sphingosyl-1,3-cyclic phosphate + choline. It catalyses the reaction an N-(acyl)-sphingosylphosphoethanolamine = an N-(acyl)-sphingosyl-1,3-cyclic phosphate + ethanolamine. The catalysed reaction is a 1-acyl-sn-glycero-3-phosphocholine = a 1-acyl-sn-glycero-2,3-cyclic phosphate + choline. The enzyme catalyses a 1-acyl-sn-glycero-3-phosphoethanolamine = a 1-acyl-sn-glycero-2,3-cyclic phosphate + ethanolamine. Dermonecrotic toxins cleave the phosphodiester linkage between the phosphate and headgroup of certain phospholipids (sphingolipid and lysolipid substrates), forming an alcohol (often choline) and a cyclic phosphate. This toxin acts on sphingomyelin (SM). It may also act on ceramide phosphoethanolamine (CPE), lysophosphatidylcholine (LPC) and lysophosphatidylethanolamine (LPE), but not on lysophosphatidylserine (LPS), and lysophosphatidylglycerol (LPG). It acts by transphosphatidylation, releasing exclusively cyclic phosphate products as second products. Induces dermonecrosis, hemolysis, increased vascular permeability, edema, inflammatory response, and platelet aggregation. The sequence is that of Dermonecrotic toxin LspiSicTox-betaIE1ii from Loxosceles spinulosa (Recluse spider).